Reading from the N-terminus, the 813-residue chain is Ribonuclease R (813 aa).

The RNB domain maps to 260-587; it reads RVDLRDLPLV…LHRAIKYLLA (328 aa). Lysine 544 carries the N6-acetyllysine modification. An S1 motif domain is found at 644–725; sequence GNVFKGVISS…DERKIDFSLI (82 aa). Positions 733–813 are disordered; sequence NVGKTAREKA…KRAAKKKVAE (81 aa). Basic and acidic residues-rich tracts occupy residues 737-749 and 761-774; these read TAREKAKKGDAGK and VNFEPDSAFRGEKK. Residues 775 to 791 are compositionally biased toward basic residues; sequence TKPKAAKKDARKAKKPS. The segment covering 792-801 has biased composition (low complexity); the sequence is AKTQKIAAAT. Over residues 802 to 813 the composition is skewed to basic residues; the sequence is KAKRAAKKKVAE.

It belongs to the RNR ribonuclease family. RNase R subfamily. In terms of assembly, monomer.

It localises to the cytoplasm. The catalysed reaction is Exonucleolytic cleavage in the 3'- to 5'-direction to yield nucleoside 5'-phosphates.. In terms of biological role, 3'-5' exoribonuclease that releases 5'-nucleoside monophosphates and is involved in maturation of structured RNAs. Required for the expression of virulence genes on the large plasmid of S.flexneri at the post-transcriptional level. This chain is Ribonuclease R, found in Shigella flexneri.